Reading from the N-terminus, the 283-residue chain is ATP phosphoribosyltransferase (283 aa).

It belongs to the ATP phosphoribosyltransferase family. Long subfamily. Requires Mg(2+) as cofactor.

It localises to the cytoplasm. It carries out the reaction 1-(5-phospho-beta-D-ribosyl)-ATP + diphosphate = 5-phospho-alpha-D-ribose 1-diphosphate + ATP. It functions in the pathway amino-acid biosynthesis; L-histidine biosynthesis; L-histidine from 5-phospho-alpha-D-ribose 1-diphosphate: step 1/9. Its activity is regulated as follows. Feedback inhibited by histidine. Its function is as follows. Catalyzes the condensation of ATP and 5-phosphoribose 1-diphosphate to form N'-(5'-phosphoribosyl)-ATP (PR-ATP). Has a crucial role in the pathway because the rate of histidine biosynthesis seems to be controlled primarily by regulation of HisG enzymatic activity. This Bacteroides fragilis (strain ATCC 25285 / DSM 2151 / CCUG 4856 / JCM 11019 / LMG 10263 / NCTC 9343 / Onslow / VPI 2553 / EN-2) protein is ATP phosphoribosyltransferase.